We begin with the raw amino-acid sequence, 325 residues long: Cytochrome f (325 aa).

Residues 1-40 (MSKINLSTMWSSFIKKIAKTILVAIACISLFLTSSPAANA) form the signal peptide. Heme contacts are provided by tyrosine 41, cysteine 62, cysteine 65, and histidine 66. The helical transmembrane segment at 291-311 (VKWLMAFFALVMLAQIMLVLK) threads the bilayer.

It belongs to the cytochrome f family. As to quaternary structure, the 4 large subunits of the cytochrome b6-f complex are cytochrome b6, subunit IV (17 kDa polypeptide, PetD), cytochrome f and the Rieske protein, while the 4 small subunits are PetG, PetL, PetM and PetN. The complex functions as a dimer. Heme serves as cofactor.

It localises to the cellular thylakoid membrane. In terms of biological role, component of the cytochrome b6-f complex, which mediates electron transfer between photosystem II (PSII) and photosystem I (PSI), cyclic electron flow around PSI, and state transitions. In Trichodesmium erythraeum (strain IMS101), this protein is Cytochrome f.